Here is a 256-residue protein sequence, read N- to C-terminus: Thiazole synthase (256 aa).

Lysine 96 (schiff-base intermediate with DXP) is an active-site residue. 1-deoxy-D-xylulose 5-phosphate is bound by residues glycine 157, 184-185, and 206-207; these read AG and NT.

This sequence belongs to the ThiG family. Homotetramer. Forms heterodimers with either ThiH or ThiS.

The protein localises to the cytoplasm. The enzyme catalyses [ThiS sulfur-carrier protein]-C-terminal-Gly-aminoethanethioate + 2-iminoacetate + 1-deoxy-D-xylulose 5-phosphate = [ThiS sulfur-carrier protein]-C-terminal Gly-Gly + 2-[(2R,5Z)-2-carboxy-4-methylthiazol-5(2H)-ylidene]ethyl phosphate + 2 H2O + H(+). The protein operates within cofactor biosynthesis; thiamine diphosphate biosynthesis. Catalyzes the rearrangement of 1-deoxy-D-xylulose 5-phosphate (DXP) to produce the thiazole phosphate moiety of thiamine. Sulfur is provided by the thiocarboxylate moiety of the carrier protein ThiS. In vitro, sulfur can be provided by H(2)S. This chain is Thiazole synthase, found in Brucella melitensis biotype 2 (strain ATCC 23457).